Consider the following 257-residue polypeptide: Phosphate import ATP-binding protein PstB (257 aa).

The region spanning isoleucine 11–isoleucine 252 is the ABC transporter domain. Glycine 43–serine 50 contacts ATP.

The protein belongs to the ABC transporter superfamily. Phosphate importer (TC 3.A.1.7) family. The complex is composed of two ATP-binding proteins (PstB), two transmembrane proteins (PstC and PstA) and a solute-binding protein (PstS).

The protein localises to the cell inner membrane. It carries out the reaction phosphate(out) + ATP + H2O = ADP + 2 phosphate(in) + H(+). In terms of biological role, part of the ABC transporter complex PstSACB involved in phosphate import. Responsible for energy coupling to the transport system. The polypeptide is Phosphate import ATP-binding protein PstB (Escherichia coli O6:K15:H31 (strain 536 / UPEC)).